Consider the following 398-residue polypeptide: Tryptophan synthase beta chain (398 aa).

Residue Lys-88 is modified to N6-(pyridoxal phosphate)lysine.

The protein belongs to the TrpB family. Tetramer of two alpha and two beta chains. The cofactor is pyridoxal 5'-phosphate.

It carries out the reaction (1S,2R)-1-C-(indol-3-yl)glycerol 3-phosphate + L-serine = D-glyceraldehyde 3-phosphate + L-tryptophan + H2O. It functions in the pathway amino-acid biosynthesis; L-tryptophan biosynthesis; L-tryptophan from chorismate: step 5/5. The beta subunit is responsible for the synthesis of L-tryptophan from indole and L-serine. The chain is Tryptophan synthase beta chain from Actinobacillus succinogenes (strain ATCC 55618 / DSM 22257 / CCUG 43843 / 130Z).